The primary structure comprises 266 residues: Vitamin B12-binding protein (266 aa).

The first 22 residues, 1 to 22 (MVKQMFRALVALLLTLPVWLYA), serve as a signal peptide directing secretion. Residues 25–266 (RVITLSPANT…QLCNALSQVN (242 aa)) form the Fe/B12 periplasmic-binding domain. Residues tyrosine 50 and 242–246 (DWFER) contribute to the cyanocob(III)alamin site. An intrachain disulfide couples cysteine 183 to cysteine 259.

This sequence belongs to the BtuF family. As to quaternary structure, the complex is composed of two ATP-binding proteins (BtuD), two transmembrane proteins (BtuC) and a solute-binding protein (BtuF).

It is found in the periplasm. Functionally, part of the ABC transporter complex BtuCDF involved in vitamin B12 import. Binds vitamin B12 and delivers it to the periplasmic surface of BtuC. This Salmonella choleraesuis (strain SC-B67) protein is Vitamin B12-binding protein.